The following is a 142-amino-acid chain: ATP synthase epsilon chain (142 aa).

Belongs to the ATPase epsilon chain family. As to quaternary structure, F-type ATPases have 2 components, CF(1) - the catalytic core - and CF(0) - the membrane proton channel. CF(1) has five subunits: alpha(3), beta(3), gamma(1), delta(1), epsilon(1). CF(0) has three main subunits: a, b and c.

It localises to the cell inner membrane. Functionally, produces ATP from ADP in the presence of a proton gradient across the membrane. The polypeptide is ATP synthase epsilon chain (Shewanella baltica (strain OS185)).